The following is a 301-amino-acid chain: Rhodopsin (301 aa).

Over 1–18 the chain is Extracellular; the sequence is LHMIHLHWYQYPPMNPIM. The helical transmembrane segment at 19–43 threads the bilayer; sequence YPLLLVFMLITGILCLAGNFVTIWV. The Cytoplasmic portion of the chain corresponds to 44-55; sequence FMNTKSLRTPAN. The helical transmembrane segment at 56 to 78 threads the bilayer; that stretch reads LLVVNLAMSDFLMMFTMFPPMMI. The Extracellular segment spans residues 79–92; that stretch reads TCYYHTWTLGATFC. A disulfide bridge links C92 with C169. A helical membrane pass occupies residues 93–115; that stretch reads QVYAFLGNLCGCASIWTMVFITF. Positions 116 to 118 match the 'Ionic lock' involved in activated form stabilization motif; the sequence is DRY. Over 116–134 the chain is Cytoplasmic; sequence DRYNVIVKGVAGEPLSTKK. The helical transmembrane segment at 135–155 threads the bilayer; sequence ATLWILTIWILSTTWCVAPFF. Topologically, residues 156–182 are extracellular; it reads GWNRYVPEGNLTGCGTDYLSQDILSRS. A glycan (N-linked (GlcNAc...) asparagine) is linked at N165. A helical transmembrane segment spans residues 183–204; it reads YLYIYSTWVYFLPLAITIYCYV. Residues 205–245 lie on the Cytoplasmic side of the membrane; it reads VIIKAVAAHEKGMRDQAKKMGIKSLRNEEAQKTSAECRLAK. The chain crosses the membrane as a helical span at residues 246–267; sequence IAMTTVALWFIAWTPYLLINWV. The Extracellular segment spans residues 268 to 278; the sequence is GMFARSYLSPV. A helical membrane pass occupies residues 279–300; sequence YTIWGYVFAKANAVYNPIVYAI. Position 288 is an N6-(retinylidene)lysine (K288).

This sequence belongs to the G-protein coupled receptor 1 family. Opsin subfamily. As to quaternary structure, homodimer. Interacts with GNAQ. Contains one covalently linked retinal chromophore.

It localises to the cell projection. It is found in the rhabdomere membrane. Functionally, photoreceptor required for image-forming vision at low light intensity. Can use both retinal and 3-dehydroretinal as visual pigment. Light-induced isomerization of 11-cis to all-trans retinal triggers a conformational change that activates signaling via G-proteins. Signaling via GNAQ probably mediates the activation of phospholipase C. This is Rhodopsin (RHO) from Orconectes australis (Southern cave crayfish).